The sequence spans 206 residues: Flavin prenyltransferase UbiX (206 aa).

Residues 14-16, threonine 40, 101-104, and arginine 136 each bind FMN; these read GAS and SMGT. Residues tyrosine 166 and lysine 182 each coordinate dimethylallyl phosphate.

It belongs to the UbiX/PAD1 family.

The catalysed reaction is dimethylallyl phosphate + FMNH2 = prenylated FMNH2 + phosphate. Its function is as follows. Flavin prenyltransferase that catalyzes the synthesis of the prenylated FMN cofactor (prenyl-FMN) for 4-hydroxy-3-polyprenylbenzoic acid decarboxylase UbiD. The prenyltransferase is metal-independent and links a dimethylallyl moiety from dimethylallyl monophosphate (DMAP) to the flavin N5 and C6 atoms of FMN. The protein is Flavin prenyltransferase UbiX of Halalkalibacterium halodurans (strain ATCC BAA-125 / DSM 18197 / FERM 7344 / JCM 9153 / C-125) (Bacillus halodurans).